The sequence spans 245 residues: Biosynthetic peptidoglycan transglycosylase (245 aa).

Residues 13 to 35 (VGLARWIVYAGSVFAGAWLATQL) form a helical membrane-spanning segment.

Belongs to the glycosyltransferase 51 family.

The protein localises to the cell inner membrane. It carries out the reaction [GlcNAc-(1-&gt;4)-Mur2Ac(oyl-L-Ala-gamma-D-Glu-L-Lys-D-Ala-D-Ala)](n)-di-trans,octa-cis-undecaprenyl diphosphate + beta-D-GlcNAc-(1-&gt;4)-Mur2Ac(oyl-L-Ala-gamma-D-Glu-L-Lys-D-Ala-D-Ala)-di-trans,octa-cis-undecaprenyl diphosphate = [GlcNAc-(1-&gt;4)-Mur2Ac(oyl-L-Ala-gamma-D-Glu-L-Lys-D-Ala-D-Ala)](n+1)-di-trans,octa-cis-undecaprenyl diphosphate + di-trans,octa-cis-undecaprenyl diphosphate + H(+). The protein operates within cell wall biogenesis; peptidoglycan biosynthesis. In terms of biological role, peptidoglycan polymerase that catalyzes glycan chain elongation from lipid-linked precursors. The protein is Biosynthetic peptidoglycan transglycosylase of Burkholderia vietnamiensis (strain G4 / LMG 22486) (Burkholderia cepacia (strain R1808)).